The chain runs to 226 residues: Sugar fermentation stimulation protein homolog (226 aa).

It belongs to the SfsA family.

This Ruminiclostridium cellulolyticum (strain ATCC 35319 / DSM 5812 / JCM 6584 / H10) (Clostridium cellulolyticum) protein is Sugar fermentation stimulation protein homolog.